The following is a 678-amino-acid chain: Amino-acid acetyltransferase, mitochondrial (678 aa).

Residues 86-111 (LKAQHPPKAQTEPTTGHSKGTVTQSL) are disordered. Polar residues predominate over residues 96–111 (TEPTTGHSKGTVTQSL). Residues 499–668 (NRPRLSLDDP…YEQVCRSIQP (170 aa)) form the N-acetyltransferase domain.

It belongs to the acetyltransferase family.

The protein localises to the mitochondrion. The catalysed reaction is L-glutamate + acetyl-CoA = N-acetyl-L-glutamate + CoA + H(+). It participates in amino-acid biosynthesis; L-arginine biosynthesis; N(2)-acetyl-L-ornithine from L-glutamate: step 1/4. In terms of biological role, N-acetylglutamate synthase involved in arginine biosynthesis. The sequence is that of Amino-acid acetyltransferase, mitochondrial (arg2) from Aspergillus oryzae (strain ATCC 42149 / RIB 40) (Yellow koji mold).